A 416-amino-acid polypeptide reads, in one-letter code: Neamine transaminase NeoN (416 aa).

Lys-231 carries the post-translational modification N6-(pyridoxal phosphate)lysine.

The protein belongs to the class-III pyridoxal-phosphate-dependent aminotransferase family. Requires pyridoxal 5'-phosphate as cofactor.

It catalyses the reaction neomycin C + 2-oxoglutarate = 6'''-deamino-6'''-oxoneomycin C + L-glutamate. The catalysed reaction is neamine + 2-oxoglutarate = 6'-oxoparomamine + L-glutamate. The protein operates within antibiotic biosynthesis; neomycin biosynthesis. 6'-oxoglucosaminyl:L-glutamate aminotransferase that catalyzes pyridoxal-5'-phosphate-mediated transamination for the conversion of paromamine to neamine in the biosynthetic pathway of neomycin. Also able to catalyze deamination at C-6''' of neomycin. The polypeptide is Neamine transaminase NeoN (neoN) (Streptomyces fradiae (Streptomyces roseoflavus)).